A 119-amino-acid chain; its full sequence is Dolichyl-diphosphooligosaccharide--protein glycosyltransferase subunit DAD1 (119 aa).

Position 2 is an N-acetylserine (Ser-2). The Cytoplasmic segment spans residues 2–30 (SASVASVISRFLEEYLSSTPQRLKLLDAY). Residues 31–51 (LLYILLTGALQFGYCLLVGTF) form a helical membrane-spanning segment. Residues 52-54 (PFN) lie on the Lumenal side of the membrane. The chain crosses the membrane as a helical span at residues 55–75 (SFLSGFISCVGSFILAGNGSL). Residues 76–81 (RNRSNN) are Cytoplasmic-facing. The chain crosses the membrane as a helical span at residues 82 to 98 (VFTLVRCFSSLVTLFYS). The Lumenal segment spans residues 99 to 119 (RSPPREVPRGACIALFCERGN).

This sequence belongs to the DAD/OST2 family. Component of the oligosaccharyltransferase (OST) complex. OST exists in two different complex forms which contain common core subunits RPN1, RPN2, OST48, OST4, DAD1 and TMEM258, either STT3A or STT3B as catalytic subunits, and form-specific accessory subunits. STT3A complex assembly occurs through the formation of 3 subcomplexes. Subcomplex 1 contains RPN1 and TMEM258, subcomplex 2 contains the STT3A-specific subunits STT3A, DC2/OSTC, and KCP2 as well as the core subunit OST4, and subcomplex 3 contains RPN2, DAD1, and OST48. The STT3A complex can form stable complexes with the Sec61 complex or with both the Sec61 and TRAP complexes.

Its subcellular location is the endoplasmic reticulum membrane. It functions in the pathway protein modification; protein glycosylation. In terms of biological role, subunit of the oligosaccharyl transferase (OST) complex that catalyzes the initial transfer of a defined glycan (Glc(3)Man(9)GlcNAc(2) in eukaryotes) from the lipid carrier dolichol-pyrophosphate to an asparagine residue within an Asn-X-Ser/Thr consensus motif in nascent polypeptide chains, the first step in protein N-glycosylation. N-glycosylation occurs cotranslationally and the complex associates with the Sec61 complex at the channel-forming translocon complex that mediates protein translocation across the endoplasmic reticulum (ER). All subunits are required for a maximal enzyme activity. The sequence is that of Dolichyl-diphosphooligosaccharide--protein glycosyltransferase subunit DAD1 from Canis lupus familiaris (Dog).